Reading from the N-terminus, the 840-residue chain is MAGPGSTGGQIGAAALAGGARSKVAPSVDFDHSCSDSVEYLTLNFGPFETVHRWRRLPPCDEFVGARRSKHTVVAYKDAIYVFGGDNGKTMLNDLLRFDVKDCSWCRAFTTGTPPAPRYHHSAVVYGSSMFVFGGYTGDIYSNSNLKNKNDLFEYKFATGQWTEWKIEGRLPVARSAHGATVYSDKLWIFAGYDGNARLNDMWTIGLQDRELTCWEEVAQSGEIPPSCCNFPVAVCRDKMFVFSGQSGAKITNNLFQFEFKDKTWTRIPTEHLLRGSPPPPQRRYGHTMVAFDRHLYVFGGAADNTLPNELHCYDVDFQTWEVVQPSSDSEVGGAEVPERACASEEVPTLTYEERVGFKKSRDVFGLDFGTTSAKQPTQPASELPSGRLFHAAAVISDAMYIFGGTVDNNIRSGEMYRFQFSCYPKCTLHEDYGRLWESRQFCDVEFVLGEKEECVQGHVAIVTARSRWLRRKITQARERLAQKLEQEAAPVPREAPGVAAGGARPPLLHVAIREAEARPFEVLMQFLYTDKIKYPRKGHVEDVLLIMDVYKLALSFQLCRLEQLCRQYIEASVDLQNVLVVCESAARLQLSQLKEHCLNFVVKESHFNQVIMMKEFERLSSPLIVEIVRRKQQPPPRTPLDQPVDIGTSLIQDMKAYLEGAGAEFCDITLLLDGHPRPAHKAILAARSSYFEAMFRSFMPEDGQVNISIGEMVPSRQAFESMLRYIYYGEVNMPPEDSLYLFAAPYYYGFYNNRLQAYCKQNLEMNVTVQNVLQILEAADKTQALDMKRHCLHIIVHQFTKVSKLPTLRSLSQQLLLDIIDSLASHISDKQCAELGADI.

Residue Ala-2 is modified to N-acetylalanine. Kelch repeat units lie at residues 79–128 (AIYV…VYGS), 130–185 (MFVF…VYSD), 187–238 (LWIF…VCRD), 239–285 (KMFV…QRRY), 295–341 (HLYV…PERA), and 399–450 (AMYI…FVLG). BTB domains are found at residues 443–537 (CDVE…KYPR) and 667–736 (CDIT…NMPP).

The protein belongs to the LZTR1 family. As to quaternary structure, homodimer. Component of the BCR(LZTR1) E3 ubiquitin ligase complex, at least composed of CUL3, LZTR1 and RBX1. Interacts with Ras (K-Ras/KRAS, N-Ras/NRAS and H-Ras/HRAS). Interacts with RAF1. Interacts with SHOC2. Interacts with PPP1CB. In terms of processing, phosphorylated on tyrosine upon induction of apoptosis, leading to its degradation by the proteasome.

It is found in the endomembrane system. Its subcellular location is the recycling endosome. It localises to the golgi apparatus. The protein operates within protein modification; protein ubiquitination. Substrate-specific adapter of a BCR (BTB-CUL3-RBX1) E3 ubiquitin-protein ligase complex that mediates ubiquitination of Ras (K-Ras/KRAS, N-Ras/NRAS and H-Ras/HRAS). Is a negative regulator of RAS-MAPK signaling that acts by controlling Ras levels and decreasing Ras association with membranes. The protein is Leucine-zipper-like transcriptional regulator 1 of Homo sapiens (Human).